Reading from the N-terminus, the 927-residue chain is Echinoderm microtubule-associated protein-like 4 (927 aa).

The segment at 1–189 is microtubule-binding; it reads MDGFAGSLDD…IPSDVENYDD (189 aa). Positions 14–63 form a coiled coil; the sequence is AASTSDVQDRLSALELRVQQQEDEITVLKAALADVLRRLAISEDQVATVR. The segment at 85–132 is disordered; it reads NGGAGTRKPSHASSVAKKDTLSSAAKSVKRSSTLEKSHNSWDASEESR. Basic and acidic residues predominate over residues 116–132; the sequence is STLEKSHNSWDASEESR. WD repeat units lie at residues 199–237, 241–288, 296–336, 343–378, 385–424, 442–480, 485–521, 524–563, 567–604, 610–646, 653–692, 702–760, and 767–806; these read LKLE…LFNY, TQRH…VWDS, VIGL…VWDW, AEIK…FWTW, RKQG…IWSK, QISK…MWDH, EREI…LRGT, DGFQ…LWNS, SLEW…VLDA, VSIH…LYNV, YSRY…YWDI, RSEC…LFQY, and APSH…QWRL. Residues 815 to 829 show a composition bias toward polar residues; the sequence is NDNIAESSSAVNSPV. The segment at 815 to 927 is disordered; that stretch reads NDNIAESSSA…NQDDDDAPLS (113 aa). Over residues 914-927 the composition is skewed to acidic residues; that stretch reads AQDENQDDDDAPLS.

It belongs to the WD repeat EMAP family. As to quaternary structure, homotrimer; self-association is mediated by the N-terminal coiled coil.

It is found in the cytoplasm. The protein localises to the cytoskeleton. It localises to the spindle. The protein resides in the microtubule organizing center. Its subcellular location is the midbody. Its function is as follows. Essential for the formation and stability of microtubules (MTs). Required for the organization of the mitotic spindle and for the proper attachment of kinetochores to MTs. Promotes the recruitment of NUDC to the mitotic spindle for mitotic progression. The sequence is that of Echinoderm microtubule-associated protein-like 4 (eml4) from Xenopus laevis (African clawed frog).